We begin with the raw amino-acid sequence, 500 residues long: Matrilin-1 (500 aa).

Positions 1–29 (MKVTSGPAFALCSLLLLLLLLLQVPDSLS) are cleaved as a signal peptide. Residues 30-226 (LVPQPRGHLC…AKKFQEAFCV (197 aa)) enclose the VWFA 1 domain. A glycan (N-linked (GlcNAc...) asparagine) is linked at Asn-80. An EGF-like domain is found at 227–267 (VSDLCATGDHDCEQLCVSSPGSYTCACHEGFTLNSDGKTCN). Intrachain disulfides connect Cys-231–Cys-242, Cys-238–Cys-251, and Cys-253–Cys-266. Residues 268 to 457 (VCRGGGSGSA…GKKLQKQICV (190 aa)) form the VWFA 2 domain. N-linked (GlcNAc...) asparagine glycosylation is present at Asn-348. The stretch at 471–499 (EAKVEGLLQALTRKLEAVSGRLAVLENRI) forms a coiled coil.

In terms of assembly, homotrimer. Part of a complex composed of MATN1 (via VWFA1 domain), type 2 collagens and type 6 collagens. Forms a complex (via covalent bonds) with ACAN; the interaction increases in abundance with increasing age of the organism via an increase in occupancy of MATN1 binding sites. Interacts with COMP. In terms of processing, N-glycosylated; reduces binding affinity for type 2 collagens. Expressed in femoral head articular cartilage. Expressed in the trachea and extraskeletal tissue around the eye.

It is found in the secreted. The protein localises to the extracellular space. It localises to the extracellular matrix. A major component of the extracellular matrix of non-articular cartilage. Binds to type 2 collagens and forms long concatenated protein networks as part of the extracellular matrix. Required for the network-like organization and bundling of collagen fibrils surrounding chondrocytes in the zones of maturation and hypertrophy. Required for mechanotransduction and adaption to mechanical loading in cartilage chondrocytes, resulting in an increase in expression of the extracellular matrix components ACAN and COL2A1. Acts as a moderator of angiogenesis in response to injury. This Mus musculus (Mouse) protein is Matrilin-1.